Here is a 462-residue protein sequence, read N- to C-terminus: tRNA modification GTPase MnmE (462 aa).

Residues R22, E87, and R126 each coordinate (6S)-5-formyl-5,6,7,8-tetrahydrofolate. In terms of domain architecture, TrmE-type G spans 220–382 (GLKVAIVGRP…LARKVQEIVL (163 aa)). N230 lines the K(+) pocket. GTP-binding positions include 230–235 (NVGKSS), 249–255 (SNIPGTT), and 274–277 (DTAG). S234 lines the Mg(2+) pocket. Positions 249, 251, and 254 each coordinate K(+). T255 serves as a coordination point for Mg(2+). K462 serves as a coordination point for (6S)-5-formyl-5,6,7,8-tetrahydrofolate.

Belongs to the TRAFAC class TrmE-Era-EngA-EngB-Septin-like GTPase superfamily. TrmE GTPase family. As to quaternary structure, homodimer. Heterotetramer of two MnmE and two MnmG subunits. The cofactor is K(+).

The protein localises to the cytoplasm. In terms of biological role, exhibits a very high intrinsic GTPase hydrolysis rate. Involved in the addition of a carboxymethylaminomethyl (cmnm) group at the wobble position (U34) of certain tRNAs, forming tRNA-cmnm(5)s(2)U34. This chain is tRNA modification GTPase MnmE, found in Moorella thermoacetica (strain ATCC 39073 / JCM 9320).